The primary structure comprises 484 residues: Protein phosphatase 1B (484 aa).

Residues 1-14 show a composition bias toward basic and acidic residues; the sequence is MGAFLDKPKTEKHN. The disordered stretch occupies residues 1–20; that stretch reads MGAFLDKPKTEKHNAHGAGN. G2 is lipidated: N-myristoyl glycine. Residue K12 forms a Glycyl lysine isopeptide (Lys-Gly) (interchain with G-Cter in ISG15) linkage. The PPM-type phosphatase domain occupies 23–295; it reads RYGLSSMQGW…DNMSIVLVCF (273 aa). D60 and G61 together coordinate Mn(2+). A Glycyl lysine isopeptide (Lys-Gly) (interchain with G-Cter in ISG15) cross-link involves residue K142. D243 and D286 together coordinate Mn(2+). At S391 the chain carries Phosphoserine. The interval 431 to 484 is disordered; it reads EENPAEQAATAASSNSDAGNTVAMQESHTESKSDLAELDSCTEDAGTKMSGEKL. The segment covering 440-456 has biased composition (polar residues); the sequence is TAASSNSDAGNTVAMQE.

Belongs to the PP2C family. Monomer. Interacts with PAK6. Interacts with the phosphorylated form of IKBKB/IKKB. Mg(2+) serves as cofactor. Mn(2+) is required as a cofactor. Isgylation negatively regulates its activity. Post-translationally, N-myristoylation is essential for the recognition of its substrates for dephosphorylation.

Its subcellular location is the cytoplasm. The protein localises to the cytosol. It localises to the membrane. The enzyme catalyses O-phospho-L-seryl-[protein] + H2O = L-seryl-[protein] + phosphate. The catalysed reaction is O-phospho-L-threonyl-[protein] + H2O = L-threonyl-[protein] + phosphate. In terms of biological role, enzyme with a broad specificity. Dephosphorylates PRKAA1 and PRKAA2. Inhibits TBK1-mediated antiviral signaling by dephosphorylating it at 'Ser-172'. Plays an important role in the termination of TNF-alpha-mediated NF-kappa-B activation through dephosphorylating and inactivating IKBKB/IKKB. This chain is Protein phosphatase 1B (PPM1B), found in Bos taurus (Bovine).